The primary structure comprises 158 residues: uncharacterized protein (158 aa).

The disordered stretch occupies residues 1 to 26; it reads MRASRSPPSPRRCHHHHEATGAASGA.

This is an uncharacterized protein from Homo sapiens (Human).